A 499-amino-acid chain; its full sequence is Glycerol kinase (499 aa).

Thr-12 provides a ligand contact to ADP. ATP-binding residues include Thr-12, Thr-13, and Ser-14. Thr-12 contacts sn-glycerol 3-phosphate. Position 16 (Arg-16) interacts with ADP. Sn-glycerol 3-phosphate contacts are provided by Arg-82, Glu-83, Tyr-134, and Asp-245. Positions 82, 83, 134, 245, and 246 each coordinate glycerol. The ADP site is built by Thr-267 and Gly-311. The ATP site is built by Thr-267, Gly-311, Gln-315, and Gly-412. ADP-binding residues include Gly-412 and Asn-416.

It belongs to the FGGY kinase family.

The catalysed reaction is glycerol + ATP = sn-glycerol 3-phosphate + ADP + H(+). It functions in the pathway polyol metabolism; glycerol degradation via glycerol kinase pathway; sn-glycerol 3-phosphate from glycerol: step 1/1. With respect to regulation, inhibited by fructose 1,6-bisphosphate (FBP). Its function is as follows. Key enzyme in the regulation of glycerol uptake and metabolism. Catalyzes the phosphorylation of glycerol to yield sn-glycerol 3-phosphate. This chain is Glycerol kinase, found in Brucella anthropi (strain ATCC 49188 / DSM 6882 / CCUG 24695 / JCM 21032 / LMG 3331 / NBRC 15819 / NCTC 12168 / Alc 37) (Ochrobactrum anthropi).